Reading from the N-terminus, the 450-residue chain is Exodeoxyribonuclease 7 large subunit (450 aa).

This sequence belongs to the XseA family. In terms of assembly, heterooligomer composed of large and small subunits.

The protein resides in the cytoplasm. It carries out the reaction Exonucleolytic cleavage in either 5'- to 3'- or 3'- to 5'-direction to yield nucleoside 5'-phosphates.. Bidirectionally degrades single-stranded DNA into large acid-insoluble oligonucleotides, which are then degraded further into small acid-soluble oligonucleotides. This Listeria monocytogenes serotype 4b (strain CLIP80459) protein is Exodeoxyribonuclease 7 large subunit.